The sequence spans 181 residues: Inner membrane-spanning protein YciB (181 aa).

The next 5 helical transmembrane spans lie at I22–A42, M50–D70, I80–I100, W122–L142, and F148–V168.

Belongs to the YciB family.

It localises to the cell inner membrane. Its function is as follows. Plays a role in cell envelope biogenesis, maintenance of cell envelope integrity and membrane homeostasis. This Aliivibrio fischeri (strain MJ11) (Vibrio fischeri) protein is Inner membrane-spanning protein YciB.